A 343-amino-acid chain; its full sequence is tRNA-specific 2-thiouridylase MnmA 2 (343 aa).

ATP is bound by residues 7 to 14 (GMSGGVDS) and Leu-33. The Nucleophile role is filled by Cys-91. Cysteines 91 and 189 form a disulfide. Gly-115 provides a ligand contact to ATP. The tract at residues 139–141 (KDQ) is interaction with tRNA. Cys-189 functions as the Cysteine persulfide intermediate in the catalytic mechanism.

Belongs to the MnmA/TRMU family.

The protein resides in the cytoplasm. It catalyses the reaction S-sulfanyl-L-cysteinyl-[protein] + uridine(34) in tRNA + AH2 + ATP = 2-thiouridine(34) in tRNA + L-cysteinyl-[protein] + A + AMP + diphosphate + H(+). Catalyzes the 2-thiolation of uridine at the wobble position (U34) of tRNA, leading to the formation of s(2)U34. The protein is tRNA-specific 2-thiouridylase MnmA 2 of Fusobacterium nucleatum subsp. nucleatum (strain ATCC 25586 / DSM 15643 / BCRC 10681 / CIP 101130 / JCM 8532 / KCTC 2640 / LMG 13131 / VPI 4355).